The sequence spans 181 residues: Large ribosomal subunit protein uL5 (181 aa).

This sequence belongs to the universal ribosomal protein uL5 family. In terms of assembly, part of the 50S ribosomal subunit; part of the 5S rRNA/L5/L18/L25 subcomplex. Contacts the 5S rRNA and the P site tRNA. Forms a bridge to the 30S subunit in the 70S ribosome.

Its function is as follows. This is one of the proteins that bind and probably mediate the attachment of the 5S RNA into the large ribosomal subunit, where it forms part of the central protuberance. In the 70S ribosome it contacts protein S13 of the 30S subunit (bridge B1b), connecting the 2 subunits; this bridge is implicated in subunit movement. Contacts the P site tRNA; the 5S rRNA and some of its associated proteins might help stabilize positioning of ribosome-bound tRNAs. This chain is Large ribosomal subunit protein uL5, found in Picosynechococcus sp. (strain ATCC 27264 / PCC 7002 / PR-6) (Agmenellum quadruplicatum).